A 241-amino-acid polypeptide reads, in one-letter code: Methylosome subunit pICln (241 aa).

The interval 88 to 112 is disordered; the sequence is EDKEAHMADQEEEESEDDDDDEEPI. The segment covering 97–112 has biased composition (acidic residues); the sequence is QEEEESEDDDDDEEPI.

Belongs to the pICln (TC 1.A.47) family. In terms of assembly, component of the methylosome, a 20S complex containing at least clns1a/picln, prmt5/skb1 and wdr77/mep50; may mediate snrpd1 and snrpd3 methylation. Forms a 6S pICln-Sm complex composed of clns1a/picln, snrpd1, snrpd2, snrpe, snrpf and snrpg; ring-like structure where clns1a/pICln mimics additional Sm proteins and which is unable to assemble into the core snRNP.

The protein localises to the cytoplasm. It localises to the cytosol. The protein resides in the nucleus. Its subcellular location is the cytoskeleton. Involved in both the assembly of spliceosomal snRNPs and the methylation of Sm proteins. Chaperone that regulates the assembly of spliceosomal U1, U2, U4 and U5 small nuclear ribonucleoproteins (snRNPs), the building blocks of the spliceosome, and thereby plays an important role in the splicing of cellular pre-mRNAs. Most spliceosomal snRNPs contain a common set of Sm proteins SNRPB, SNRPD1, SNRPD2, SNRPD3, SNRPE, SNRPF and SNRPG that assemble in a heptameric protein ring on the Sm site of the small nuclear RNA to form the core snRNP (Sm core). In the cytosol, the Sm proteins SNRPD1, SNRPD2, SNRPE, SNRPF and SNRPG are trapped in an inactive 6S pICln-Sm complex by the chaperone CLNS1A that controls the assembly of the core snRNP. Dissociation by the SMN complex of CLNS1A from the trapped Sm proteins and their transfer to an SMN-Sm complex triggers the assembly of core snRNPs and their transport to the nucleus. The protein is Methylosome subunit pICln (clns1a) of Xenopus laevis (African clawed frog).